We begin with the raw amino-acid sequence, 163 residues long: PTS system fructose-specific EIIB component (163 aa).

Positions 1-163 (MMNIVLARID…FVQILRNVTK (163 aa)) constitute a PTS EIIB type-4 domain. Histidine 15 serves as the catalytic Pros-phosphohistidine intermediate. Histidine 15 bears the Phosphohistidine; by EIIA mark.

It is found in the cytoplasm. The enzyme catalyses D-fructose(out) + N(pros)-phospho-L-histidyl-[protein] = D-fructose 1-phosphate(in) + L-histidyl-[protein]. In terms of biological role, the phosphoenolpyruvate-dependent sugar phosphotransferase system (sugar PTS), a major carbohydrate active -transport system, catalyzes the phosphorylation of incoming sugar substrates concomitantly with their translocation across the cell membrane. The enzyme II LevDE PTS system is involved in fructose transport. LevD and LevE act as negative regulators of the levanase operon. They may be involved in a PTS-mediated phosphorylation of a regulator. The polypeptide is PTS system fructose-specific EIIB component (Bacillus subtilis (strain 168)).